We begin with the raw amino-acid sequence, 329 residues long: Sideroflexin-1.1 (329 aa).

5 helical membrane-spanning segments follow: residues 100–122 (MPGN…GVVF), 150–167 (LFVS…VALG), 178–198 (LAAR…NIPM), 232–254 (VTLS…MNRI), and 274–294 (IQTL…CALF).

This sequence belongs to the sideroflexin family.

Its subcellular location is the mitochondrion inner membrane. The catalysed reaction is L-serine(in) = L-serine(out). It carries out the reaction L-alanine(in) = L-alanine(out). The enzyme catalyses L-cysteine(in) = L-cysteine(out). Its function is as follows. Amino acid transporter importing serine, an essential substrate of the mitochondrial branch of the one-carbon pathway, into mitochondria. Mitochondrial serine is then converted to glycine and formate, which exits to the cytosol where it is used to generate the charged folates that serve as one-carbon donors. May also transport other amino acids including alanine and cysteine. The chain is Sideroflexin-1.1 from Caenorhabditis elegans.